A 1367-amino-acid polypeptide reads, in one-letter code: Protein patched homolog 3 (1367 aa).

Over Met1–Gln97 the chain is Cytoplasmic. The chain crosses the membrane as a helical span at residues Arg98–Leu118. The Extracellular segment spans residues Arg119–Gln625. Residues Asn235, Asn310, Asn454, and Asn591 are each glycosylated (N-linked (GlcNAc...) asparagine). Residues Phe626 to Gln646 traverse the membrane as a helical segment. The SSD domain occupies Asn627 to Ile788. Topologically, residues Gly647 to Asn659 are cytoplasmic. A helical membrane pass occupies residues Val660–Phe680. The Extracellular portion of the chain corresponds to Ala681–Gln694. The chain crosses the membrane as a helical span at residues Val695–Tyr715. At Asp716–Ser737 the chain is on the cytoplasmic side. The helical transmembrane segment at Val738–Pro758 threads the bilayer. The Extracellular portion of the chain corresponds to Ala759 to Thr767. A helical membrane pass occupies residues Ala768–Ile788. Over Asp789–Asn863 the chain is Cytoplasmic. The helical transmembrane segment at Val864–Met884 threads the bilayer. Residues Tyr885–Asn1143 lie on the Extracellular side of the membrane. The helical transmembrane segment at Leu1144 to Phe1164 threads the bilayer. The Cytoplasmic segment spans residues Asn1165–Leu1171. A helical transmembrane segment spans residues Ile1172–Ile1192. Residues Lys1193–Ala1199 are Extracellular-facing. Residues Val1200 to Phe1220 traverse the membrane as a helical segment. Over Leu1221 to His1237 the chain is Cytoplasmic. The helical transmembrane segment at Met1238–Phe1258 threads the bilayer. Over Ser1259 to Thr1273 the chain is Extracellular. Residues Leu1274–Val1294 traverse the membrane as a helical segment. Residues Gly1295 to Lys1367 are Cytoplasmic-facing. The interval Pro1302–Lys1367 is disordered. Residues Arg1346 to His1356 show a composition bias toward low complexity.

It belongs to the patched family. In males, expressed in the precursor and mature sensory rays, the cloaca, and pre-anal ganglia and cephalic neurons. Also expressed in five cells in the valve region between the seminal vesicle and vas deferens of the somatic gonad.

It is found in the apical cell membrane. It localises to the cell junction. The protein resides in the adherens junction. Its function is as follows. Regulates osmosis during embryonic development. Required for larval development and in particular is involved in larval molting. The polypeptide is Protein patched homolog 3 (Caenorhabditis elegans).